The chain runs to 620 residues: MSFDIAKYPTLALVDSTQELRLLPKESLPKLCDELRRYLLDSVSRSSGHFASGLGTVELTVALHYVYNTPFDQLIWDVGHQAYPHKILTGRRDKIGTIRQKGGLHPFPWRGESEYDVLSVGHSSTSISAGIGIAVAAEKEGKNRRTVCVIGDGAITAGMAFEAMNHAGDIRPDMLVVLNDNEMSISENVGALNNHLAQLLSGKLYSSLREGGKKVFSGVPPIKELLKRTEEHIKGMVVPGTLFEELGFNYIGPVDGHDVLGLITTLKNMRDLKGPQFLHIMTKKGRGYEPAEKDPITFHAVPKFDPSSGCLPKSSGGLPSYSKIFGDWLCETAAKDNKLMAITPAMREGSGMVEFSRKFPDRYFDVAIAEQHAVTFAAGLAIGGYKPIVAIYSTFLQRAYDQVLHDVAIQKLPVLFAIDRAGIVGADGQTHQGAFDLSYLRCIPEMVIMTPSDENECRQMLYTGYHYNDGPSAVRYPRGNAVGVELTPLEKLPIGKGIVKRRGEKLAILNFGTLMPEAAKVAESLNATLVDMRFVKPLDETLILEMAASHEALVTVEENAIMGGAGSGVNEVLMAHRKPVPVLNIGLPDFFIPQGTQEEMRAELGLDAAGMEAKIKAWLA.

Residues histidine 80 and 121-123 contribute to the thiamine diphosphate site; that span reads GHS. Aspartate 152 is a Mg(2+) binding site. Thiamine diphosphate is bound by residues 153–154, asparagine 181, tyrosine 288, and glutamate 370; that span reads GA. A Mg(2+)-binding site is contributed by asparagine 181.

It belongs to the transketolase family. DXPS subfamily. As to quaternary structure, homodimer. Mg(2+) is required as a cofactor. It depends on thiamine diphosphate as a cofactor.

The catalysed reaction is D-glyceraldehyde 3-phosphate + pyruvate + H(+) = 1-deoxy-D-xylulose 5-phosphate + CO2. The protein operates within metabolic intermediate biosynthesis; 1-deoxy-D-xylulose 5-phosphate biosynthesis; 1-deoxy-D-xylulose 5-phosphate from D-glyceraldehyde 3-phosphate and pyruvate: step 1/1. Catalyzes the acyloin condensation reaction between C atoms 2 and 3 of pyruvate and glyceraldehyde 3-phosphate to yield 1-deoxy-D-xylulose-5-phosphate (DXP). In Escherichia coli O157:H7, this protein is 1-deoxy-D-xylulose-5-phosphate synthase.